The chain runs to 398 residues: Candidapepsin-3 (398 aa).

Residues 1 to 18 (MFLKNIFIALAIALLADA) form the signal peptide. Residues 19-58 (TPTTSNNSPGFVALNFDVIKTHKNVTGPQGEINTNVNVKR) constitute a propeptide, activation peptide. The N-linked (GlcNAc...) asparagine glycan is linked to asparagine 42. The Peptidase A1 domain occupies 72-384 (YASDITVGSN…DLDDNEISLA (313 aa)). Aspartate 90 is a catalytic residue. Residue 90-92 (DTG) participates in pepstatin A binding. A compositionally biased stretch (polar residues) spans 103 to 112 (VSCQAGQGQD). A disordered region spans residues 103–139 (VSCQAGQGQDPNFCKNEGTYSPSSSSSSQNLNSPFSI). Cysteine 105 and cysteine 116 are oxidised to a cystine. Low complexity predominate over residues 123 to 138 (SPSSSSSSQNLNSPFS). Residues 140 to 143 (EYGD) and 274 to 278 (DSGTT) each bind pepstatin A. Aspartate 274 is an active-site residue. Cysteine 312 and cysteine 350 are disulfide-bonded. Asparagine 313 carries an N-linked (GlcNAc...) asparagine glycan.

The protein belongs to the peptidase A1 family. O-glycosylated.

It is found in the secreted. It catalyses the reaction Preferential cleavage at the carboxyl of hydrophobic amino acids, but fails to cleave 15-Leu-|-Tyr-16, 16-Tyr-|-Leu-17 and 24-Phe-|-Phe-25 of insulin B chain. Activates trypsinogen, and degrades keratin.. This chain is Candidapepsin-3 (SAP3), found in Candida albicans (strain WO-1) (Yeast).